The sequence spans 677 residues: DNA ligase (677 aa).

Residues 36-40, 85-86, and glutamate 122 contribute to the NAD(+) site; these read DAEYD and SI. The N6-AMP-lysine intermediate role is filled by lysine 124. 4 residues coordinate NAD(+): arginine 145, glutamate 181, lysine 298, and lysine 322. Zn(2+) is bound by residues cysteine 416, cysteine 419, cysteine 434, and cysteine 440. A BRCT domain is found at 600 to 677; the sequence is LTPRPLAGKT…DEAALRALLD (78 aa).

This sequence belongs to the NAD-dependent DNA ligase family. LigA subfamily. Requires Mg(2+) as cofactor. The cofactor is Mn(2+).

It catalyses the reaction NAD(+) + (deoxyribonucleotide)n-3'-hydroxyl + 5'-phospho-(deoxyribonucleotide)m = (deoxyribonucleotide)n+m + AMP + beta-nicotinamide D-nucleotide.. Functionally, DNA ligase that catalyzes the formation of phosphodiester linkages between 5'-phosphoryl and 3'-hydroxyl groups in double-stranded DNA using NAD as a coenzyme and as the energy source for the reaction. It is essential for DNA replication and repair of damaged DNA. The sequence is that of DNA ligase from Methylibium petroleiphilum (strain ATCC BAA-1232 / LMG 22953 / PM1).